The sequence spans 34 residues: Protein HRURF (34 aa).

Functionally, may function as an inhibitory translational control element that can negatively regulate protein translation of HR gene. In Homo sapiens (Human), this protein is Protein HRURF.